The sequence spans 320 residues: Aspartate carbamoyltransferase catalytic subunit (320 aa).

Carbamoyl phosphate is bound by residues R68 and T69. L-aspartate is bound at residue K96. Residues R118, H148, and Q151 each coordinate carbamoyl phosphate. L-aspartate is bound by residues R181 and R236. Carbamoyl phosphate contacts are provided by G277 and P278.

It belongs to the aspartate/ornithine carbamoyltransferase superfamily. ATCase family. In terms of assembly, heterododecamer (2C3:3R2) of six catalytic PyrB chains organized as two trimers (C3), and six regulatory PyrI chains organized as three dimers (R2).

It catalyses the reaction carbamoyl phosphate + L-aspartate = N-carbamoyl-L-aspartate + phosphate + H(+). The protein operates within pyrimidine metabolism; UMP biosynthesis via de novo pathway; (S)-dihydroorotate from bicarbonate: step 2/3. Catalyzes the condensation of carbamoyl phosphate and aspartate to form carbamoyl aspartate and inorganic phosphate, the committed step in the de novo pyrimidine nucleotide biosynthesis pathway. The protein is Aspartate carbamoyltransferase catalytic subunit of Acidovorax ebreus (strain TPSY) (Diaphorobacter sp. (strain TPSY)).